Reading from the N-terminus, the 428-residue chain is Tryptophan synthase beta chain (428 aa).

At Lys-100 the chain carries N6-(pyridoxal phosphate)lysine.

The protein belongs to the TrpB family. As to quaternary structure, tetramer of two alpha and two beta chains. Pyridoxal 5'-phosphate serves as cofactor.

The catalysed reaction is (1S,2R)-1-C-(indol-3-yl)glycerol 3-phosphate + L-serine = D-glyceraldehyde 3-phosphate + L-tryptophan + H2O. It participates in amino-acid biosynthesis; L-tryptophan biosynthesis; L-tryptophan from chorismate: step 5/5. Its function is as follows. The beta subunit is responsible for the synthesis of L-tryptophan from indole and L-serine. The sequence is that of Tryptophan synthase beta chain from Streptomyces avermitilis (strain ATCC 31267 / DSM 46492 / JCM 5070 / NBRC 14893 / NCIMB 12804 / NRRL 8165 / MA-4680).